Reading from the N-terminus, the 150-residue chain is Small ribosomal subunit protein uS11z (150 aa).

Ser19 is subject to Phosphoserine.

This sequence belongs to the universal ribosomal protein uS11 family. In terms of assembly, interacts with AAK6.

It is found in the cytoplasm. The sequence is that of Small ribosomal subunit protein uS11z (RPS14A) from Arabidopsis thaliana (Mouse-ear cress).